Consider the following 245-residue polypeptide: Fibroblast growth factor 3 (245 aa).

The N-terminal stretch at 1–17 is a signal peptide; it reads MGLIWLLLLSLLEPSWP. An N-linked (GlcNAc...) asparagine glycan is attached at Asn65. Disordered stretches follow at residues 137–181 and 195–245; these read GSSG…FLPR and QSSQ…LAVA. The span at 161 to 173 shows a compositional bias: basic residues; the sequence is GRPRRGFKTRRTQ. Over residues 226-238 the composition is skewed to polar residues; it reads TLSTRATPSTQLH.

This sequence belongs to the heparin-binding growth factors family. As to quaternary structure, interacts with FGFR1 and FGFR2. Affinity between fibroblast growth factors (FGFs) and their receptors is increased by heparan sulfate glycosaminoglycans that function as coreceptors. Post-translationally, glycosylated.

Its subcellular location is the nucleus. The protein localises to the endoplasmic reticulum. The protein resides in the golgi apparatus. Its function is as follows. Plays an important role in the regulation of embryonic development, cell proliferation, and cell differentiation. Required for normal ear development. In Mus musculus (Mouse), this protein is Fibroblast growth factor 3 (Fgf3).